Reading from the N-terminus, the 269-residue chain is tRNA pseudouridine synthase A (269 aa).

The active-site Nucleophile is Asp51. Tyr109 contributes to the substrate binding site.

This sequence belongs to the tRNA pseudouridine synthase TruA family. Homodimer.

It catalyses the reaction uridine(38/39/40) in tRNA = pseudouridine(38/39/40) in tRNA. Its function is as follows. Formation of pseudouridine at positions 38, 39 and 40 in the anticodon stem and loop of transfer RNAs. The chain is tRNA pseudouridine synthase A from Haemophilus influenzae (strain ATCC 51907 / DSM 11121 / KW20 / Rd).